A 347-amino-acid chain; its full sequence is Geranylgeranyl pyrophosphate synthase 7, chloroplastic (347 aa).

The transit peptide at 1 to 39 directs the protein to the chloroplast; sequence MTTLNLSIFPSVKISSSASIPGFIKIQPFLLRRKLSTVL. The isopentenyl diphosphate site is built by K95, R98, and H127. Residues D134 and D140 each contribute to the Mg(2+) site. R145 contacts dimethylallyl diphosphate. R146 lines the isopentenyl diphosphate pocket. Residues K232, T233, Q270, K287, and K297 each contribute to the dimethylallyl diphosphate site.

This sequence belongs to the FPP/GGPP synthase family. As to quaternary structure, monomer. Mg(2+) serves as cofactor.

It localises to the plastid. It is found in the chloroplast. The enzyme catalyses isopentenyl diphosphate + dimethylallyl diphosphate = (2E)-geranyl diphosphate + diphosphate. It catalyses the reaction isopentenyl diphosphate + (2E)-geranyl diphosphate = (2E,6E)-farnesyl diphosphate + diphosphate. The catalysed reaction is isopentenyl diphosphate + (2E,6E)-farnesyl diphosphate = (2E,6E,10E)-geranylgeranyl diphosphate + diphosphate. It participates in isoprenoid biosynthesis; farnesyl diphosphate biosynthesis; farnesyl diphosphate from geranyl diphosphate and isopentenyl diphosphate: step 1/1. Its pathway is isoprenoid biosynthesis; geranyl diphosphate biosynthesis; geranyl diphosphate from dimethylallyl diphosphate and isopentenyl diphosphate: step 1/1. The protein operates within isoprenoid biosynthesis; geranylgeranyl diphosphate biosynthesis; geranylgeranyl diphosphate from farnesyl diphosphate and isopentenyl diphosphate: step 1/1. Its function is as follows. Catalyzes the trans-addition of the three molecules of IPP onto DMAPP to form geranylgeranyl pyrophosphate. The sequence is that of Geranylgeranyl pyrophosphate synthase 7, chloroplastic from Arabidopsis thaliana (Mouse-ear cress).